Here is a 191-residue protein sequence, read N- to C-terminus: Thymidine kinase (191 aa).

ATP is bound by residues 9–16 and 85–88; these read GTMNSGKT and DEAQ. Glu86 functions as the Proton acceptor in the catalytic mechanism. Residues Cys143, Cys146, Cys180, and His183 each contribute to the Zn(2+) site.

Belongs to the thymidine kinase family. As to quaternary structure, homotetramer.

The protein resides in the cytoplasm. It catalyses the reaction thymidine + ATP = dTMP + ADP + H(+). This is Thymidine kinase from Streptococcus gordonii (strain Challis / ATCC 35105 / BCRC 15272 / CH1 / DL1 / V288).